We begin with the raw amino-acid sequence, 430 residues long: Signal recognition particle protein (430 aa).

GTP-binding positions include 105–112, 187–191, and 245–248; these read GLQGSGKT, DTAGR, and TKLD.

Belongs to the GTP-binding SRP family. SRP54 subfamily. In terms of assembly, part of the signal recognition particle protein translocation system, which is composed of SRP and FtsY.

The protein localises to the cytoplasm. It carries out the reaction GTP + H2O = GDP + phosphate + H(+). In terms of biological role, involved in targeting and insertion of nascent membrane proteins into the cytoplasmic membrane. Binds to the hydrophobic signal sequence of the ribosome-nascent chain (RNC) as it emerges from the ribosomes. The SRP-RNC complex is then targeted to the cytoplasmic membrane where it interacts with the SRP receptor FtsY. This Thermus aquaticus protein is Signal recognition particle protein.